Here is a 432-residue protein sequence, read N- to C-terminus: Glutamate-1-semialdehyde 2,1-aminomutase (432 aa).

At lysine 272 the chain carries N6-(pyridoxal phosphate)lysine.

Belongs to the class-III pyridoxal-phosphate-dependent aminotransferase family. HemL subfamily. In terms of assembly, homodimer. It depends on pyridoxal 5'-phosphate as a cofactor.

It is found in the cytoplasm. The catalysed reaction is (S)-4-amino-5-oxopentanoate = 5-aminolevulinate. It functions in the pathway porphyrin-containing compound metabolism; protoporphyrin-IX biosynthesis; 5-aminolevulinate from L-glutamyl-tRNA(Glu): step 2/2. It participates in porphyrin-containing compound metabolism; chlorophyll biosynthesis. The polypeptide is Glutamate-1-semialdehyde 2,1-aminomutase (Trichormus variabilis (strain ATCC 29413 / PCC 7937) (Anabaena variabilis)).